The sequence spans 368 residues: Xaa-Pro dipeptidase (368 aa).

The Mn(2+) site is built by aspartate 223, aspartate 234, histidine 298, glutamate 327, and glutamate 341.

The protein belongs to the peptidase M24B family. Mn(2+) serves as cofactor.

The protein resides in the cytoplasm. It catalyses the reaction Xaa-L-Pro dipeptide + H2O = an L-alpha-amino acid + L-proline. In Lactobacillus delbrueckii subsp. lactis, this protein is Xaa-Pro dipeptidase (pepQ).